A 332-amino-acid chain; its full sequence is Eukaryotic translation initiation factor 3 subunit H (332 aa).

The MPN domain maps to 18-153; it reads VQVDGLTVLK…LKAFRLSDEM (136 aa). Positions 251–285 are disordered; sequence QQQKENYLQRRQQENQSRIQRGEDPLPDEDLSKMF.

The protein belongs to the eIF-3 subunit H family. Component of the eukaryotic translation initiation factor 3 (eIF-3) complex.

The protein resides in the cytoplasm. Its function is as follows. Component of the eukaryotic translation initiation factor 3 (eIF-3) complex, which is involved in protein synthesis of a specialized repertoire of mRNAs and, together with other initiation factors, stimulates binding of mRNA and methionyl-tRNAi to the 40S ribosome. The eIF-3 complex specifically targets and initiates translation of a subset of mRNAs involved in cell proliferation. This chain is Eukaryotic translation initiation factor 3 subunit H, found in Nematostella vectensis (Starlet sea anemone).